A 238-amino-acid polypeptide reads, in one-letter code: uncharacterized protein (238 aa).

This is an uncharacterized protein from Acidianus filamentous virus 2 (isolate Italy/Pozzuoli) (AFV-2).